The primary structure comprises 503 residues: ATP synthase subunit alpha (503 aa).

Position 170-177 (170-177 (GDRKTGKT)) interacts with ATP.

It belongs to the ATPase alpha/beta chains family. In terms of assembly, F-type ATPases have 2 components, CF(1) - the catalytic core - and CF(0) - the membrane proton channel. CF(1) has five subunits: alpha(3), beta(3), gamma(1), delta(1), epsilon(1). CF(0) has four main subunits: a, b, b' and c.

It is found in the cellular thylakoid membrane. It catalyses the reaction ATP + H2O + 4 H(+)(in) = ADP + phosphate + 5 H(+)(out). Functionally, produces ATP from ADP in the presence of a proton gradient across the membrane. The alpha chain is a regulatory subunit. The protein is ATP synthase subunit alpha of Gloeothece citriformis (strain PCC 7424) (Cyanothece sp. (strain PCC 7424)).